The primary structure comprises 129 residues: Cytochrome c oxidase subunit 5B, mitochondrial (129 aa).

The N-terminal 31 residues, 1–31 (MASRLLRGAGTLAAQALRARGPSGAAAMRSM), are a transit peptide targeting the mitochondrion. 2 positions are modified to N6-acetyllysine: lysine 68 and lysine 86. Zn(2+)-binding residues include cysteine 91, cysteine 93, cysteine 113, and cysteine 116. Residue lysine 121 is modified to N6-acetyllysine.

Belongs to the cytochrome c oxidase subunit 5B family. As to quaternary structure, component of the cytochrome c oxidase (complex IV, CIV), a multisubunit enzyme composed of 14 subunits. The complex is composed of a catalytic core of 3 subunits MT-CO1, MT-CO2 and MT-CO3, encoded in the mitochondrial DNA, and 11 supernumerary subunits COX4I1 (or COX4I2), COX5A, COX5B, COX6A1 (or COX6A2), COX6B1 (or COX6B2), COX6C, COX7A2 (or COX7A1), COX7B, COX7C, COX8A and NDUFA4, which are encoded in the nuclear genome. The complex exists as a monomer or a dimer and forms supercomplexes (SCs) in the inner mitochondrial membrane with NADH-ubiquinone oxidoreductase (complex I, CI) and ubiquinol-cytochrome c oxidoreductase (cytochrome b-c1 complex, complex III, CIII), resulting in different assemblies (supercomplex SCI(1)III(2)IV(1) and megacomplex MCI(2)III(2)IV(2)).

The protein localises to the mitochondrion inner membrane. Its pathway is energy metabolism; oxidative phosphorylation. Its function is as follows. Component of the cytochrome c oxidase, the last enzyme in the mitochondrial electron transport chain which drives oxidative phosphorylation. The respiratory chain contains 3 multisubunit complexes succinate dehydrogenase (complex II, CII), ubiquinol-cytochrome c oxidoreductase (cytochrome b-c1 complex, complex III, CIII) and cytochrome c oxidase (complex IV, CIV), that cooperate to transfer electrons derived from NADH and succinate to molecular oxygen, creating an electrochemical gradient over the inner membrane that drives transmembrane transport and the ATP synthase. Cytochrome c oxidase is the component of the respiratory chain that catalyzes the reduction of oxygen to water. Electrons originating from reduced cytochrome c in the intermembrane space (IMS) are transferred via the dinuclear copper A center (CU(A)) of subunit 2 and heme A of subunit 1 to the active site in subunit 1, a binuclear center (BNC) formed by heme A3 and copper B (CU(B)). The BNC reduces molecular oxygen to 2 water molecules using 4 electrons from cytochrome c in the IMS and 4 protons from the mitochondrial matrix. The chain is Cytochrome c oxidase subunit 5B, mitochondrial (COX5B) from Homo sapiens (Human).